Consider the following 181-residue polypeptide: Peptide deformylase 1 (181 aa).

The Fe cation site is built by Cys106 and His148. Glu149 is a catalytic residue. Fe cation is bound at residue His152.

The protein belongs to the polypeptide deformylase family. The cofactor is Fe(2+).

It catalyses the reaction N-terminal N-formyl-L-methionyl-[peptide] + H2O = N-terminal L-methionyl-[peptide] + formate. Removes the formyl group from the N-terminal Met of newly synthesized proteins. Requires at least a dipeptide for an efficient rate of reaction. N-terminal L-methionine is a prerequisite for activity but the enzyme has broad specificity at other positions. The polypeptide is Peptide deformylase 1 (Burkholderia multivorans (strain ATCC 17616 / 249)).